The chain runs to 116 residues: Immunoglobulin heavy variable 2-4 (116 aa).

Residues 1 to 19 (MAVLVLLFCLVTFPSCVLS) form the signal peptide. The Ig-like domain occupies 20 to 116 (QVQLKQSGPG…DDTAIYYCAK (97 aa)). A disulfide bond links C41 and C114.

The sequence is that of Immunoglobulin heavy variable 2-4 from Mus musculus (Mouse).